Here is a 189-residue protein sequence, read N- to C-terminus: Photosystem I assembly protein Ycf4 (189 aa).

The next 2 membrane-spanning stretches (helical) occupy residues 25–45 and 62–82; these read SVYFWAVALTGGGLGFTLAGL and LVFIPQGIAMLFYGVLGSLAG.

This sequence belongs to the Ycf4 family.

It localises to the cellular thylakoid membrane. In terms of biological role, seems to be required for the assembly of the photosystem I complex. The protein is Photosystem I assembly protein Ycf4 of Synechococcus sp. (strain JA-3-3Ab) (Cyanobacteria bacterium Yellowstone A-Prime).